A 509-amino-acid chain; its full sequence is MDIRAAEISAILKDQIKNFGQEAEVSEVGQVLSVGDGIARVYGLDNVQAGEMVEFPGGIRGMALNLEADNVGVVIFGSDRDIKEGDTVKRTGAIVDVPVGPELLGRVVDALGNPIDGKGPINAKQRARVDVKAPGIIPRKSVHEPMSTGLKAIDALIPVGRGQRELVIGDRQTGKTAIILDTILNQKAIHDNGPEGDKLYCVYVAIGQKRSTVAQFVKVLEERGALQYSIIVAATASDPAPMQYLAPFAGCAMGEYFRDNGKHALIGYDDLSKQAVAYRQMSLLLRRPPGREAYPGDVFYLHSRLLERAAKLSDERGAGSLTALPVIETQGNDVSAFIPTNVISITDGQIFLETDLFYQGIRPAVNVGLSVSRVGSSAQIKAMKQVAGSIKGELAQYREMAAFAQFGSDLDAATQRLLNRGARLTELLKQPQFSPLKTEEQVAVIFAGVNGYLDKLPVSDVGKFEHGLLSYLRSEGKAVLDTIRTEKAISDDTKAKLKGAIDSFAKSFA.

169 to 176 serves as a coordination point for ATP; the sequence is GDRQTGKT.

Belongs to the ATPase alpha/beta chains family. In terms of assembly, F-type ATPases have 2 components, CF(1) - the catalytic core - and CF(0) - the membrane proton channel. CF(1) has five subunits: alpha(3), beta(3), gamma(1), delta(1), epsilon(1). CF(0) has three main subunits: a(1), b(2) and c(9-12). The alpha and beta chains form an alternating ring which encloses part of the gamma chain. CF(1) is attached to CF(0) by a central stalk formed by the gamma and epsilon chains, while a peripheral stalk is formed by the delta and b chains.

It localises to the cell inner membrane. It catalyses the reaction ATP + H2O + 4 H(+)(in) = ADP + phosphate + 5 H(+)(out). Functionally, produces ATP from ADP in the presence of a proton gradient across the membrane. The alpha chain is a regulatory subunit. The chain is ATP synthase subunit alpha from Rhizobium meliloti (strain 1021) (Ensifer meliloti).